A 931-amino-acid chain; its full sequence is DNA mismatch repair protein MutS (931 aa).

Residues 1-10 show a composition bias toward low complexity; the sequence is MMDDTAMPAR. The segment at 1–34 is disordered; sequence MMDDTAMPARAEADAAEDELAAPAGIDRTAKADK. 674–681 is a binding site for ATP; the sequence is GPNMAGKS.

This sequence belongs to the DNA mismatch repair MutS family.

This protein is involved in the repair of mismatches in DNA. It is possible that it carries out the mismatch recognition step. This protein has a weak ATPase activity. This chain is DNA mismatch repair protein MutS, found in Azorhizobium caulinodans (strain ATCC 43989 / DSM 5975 / JCM 20966 / LMG 6465 / NBRC 14845 / NCIMB 13405 / ORS 571).